A 649-amino-acid chain; its full sequence is WEB family protein At5g55860 (649 aa).

3 coiled-coil regions span residues 59–227 (EKVL…ACSQ), 267–356 (EFAK…IESV), and 391–461 (TINQ…MSEK). Basic and acidic residues predominate over residues 443-453 (EAKAAETKALE). The tract at residues 443-483 (EAKAAETKALEQIKSMSEKTNAARNSTSSESGSQSITLSQE) is disordered. Over residues 456–467 (KSMSEKTNAARN) the composition is skewed to polar residues. The span at 468-482 (STSSESGSQSITLSQ) shows a compositional bias: low complexity. Residues 505-549 (AALAQVEAVRASENETLKKLETTQEEIKKLKTATEEALKKAAMAD) are a coiled coil. Positions 583 to 611 (MKMASESSPQQHYKAPKQKPVNNKLEKTK) are disordered.

Belongs to the WEB family.

This chain is WEB family protein At5g55860, found in Arabidopsis thaliana (Mouse-ear cress).